Reading from the N-terminus, the 309-residue chain is Succinate--CoA ligase [ADP-forming] subunit alpha-2, mitochondrial (309 aa).

The N-terminal 9 residues, 1–9 (MLSSSFERN), are a transit peptide targeting the hydrogenosome. CoA contacts are provided by residues lysine 54 and 107 to 109 (ITE). A substrate-binding site is contributed by tyrosine 171. The Tele-phosphohistidine intermediate role is filled by histidine 262.

Belongs to the succinate/malate CoA ligase alpha subunit family. In terms of assembly, heterodimer of an alpha and a beta subunit.

It is found in the hydrogenosome lumen. It carries out the reaction succinate + ATP + CoA = succinyl-CoA + ADP + phosphate. Its pathway is carbohydrate metabolism; tricarboxylic acid cycle; succinate from succinyl-CoA (ligase route): step 1/1. Succinyl-CoA synthetase functions in the citric acid cycle (TCA), coupling the hydrolysis of succinyl-CoA to the synthesis of ATP and thus represents the only step of substrate-level phosphorylation in the TCA. The alpha subunit of the enzyme binds the substrates coenzyme A and phosphate, while succinate binding and nucleotide specificity is provided by the beta subunit. This is Succinate--CoA ligase [ADP-forming] subunit alpha-2, mitochondrial (ALPHA-SCS2) from Trichomonas vaginalis.